A 202-amino-acid polypeptide reads, in one-letter code: Cutinase (202 aa).

A signal peptide spans 1 to 20; it reads MKTSAQQLLSALLLPLSVLA. Cys31 and Cys106 are joined by a disulfide. Ser117 (nucleophile) is an active-site residue. A disulfide bridge connects residues Cys165 and Cys172. Asp169 is a catalytic residue. His182 functions as the Proton donor/acceptor in the catalytic mechanism.

The protein belongs to the cutinase family. In terms of processing, the 2 disulfide bonds play a critical role in holding the catalytic residues in juxta-position; reduction of the disulfide bridges results in the complete inactivation of the enzyme.

Its subcellular location is the secreted. The enzyme catalyses cutin + H2O = cutin monomers.. Functionally, catalyzes the hydrolysis of complex carboxylic polyesters found in the cell wall of plants. Degrades cutin, a macromolecule that forms the structure of the plant cuticle. Allows pathogenic fungi to penetrate through the cuticular barrier into the host plant during the initial stage of fungal infection. The polypeptide is Cutinase (Botryotinia fuckeliana (Noble rot fungus)).